A 491-amino-acid polypeptide reads, in one-letter code: Probable cytosol aminopeptidase (491 aa).

Mn(2+) contacts are provided by Lys-264 and Asp-269. Lys-276 is an active-site residue. Asp-287, Asp-346, and Glu-348 together coordinate Mn(2+). Residue Arg-350 is part of the active site.

The protein belongs to the peptidase M17 family. The cofactor is Mn(2+).

It localises to the cytoplasm. It catalyses the reaction Release of an N-terminal amino acid, Xaa-|-Yaa-, in which Xaa is preferably Leu, but may be other amino acids including Pro although not Arg or Lys, and Yaa may be Pro. Amino acid amides and methyl esters are also readily hydrolyzed, but rates on arylamides are exceedingly low.. The catalysed reaction is Release of an N-terminal amino acid, preferentially leucine, but not glutamic or aspartic acids.. In terms of biological role, presumably involved in the processing and regular turnover of intracellular proteins. Catalyzes the removal of unsubstituted N-terminal amino acids from various peptides. In Xylella fastidiosa (strain M12), this protein is Probable cytosol aminopeptidase.